The sequence spans 396 residues: DNA polymerase interacting tetratricopeptide repeat-containing, protein of 47 kDa (396 aa).

TPR repeat units lie at residues 91–124 (ALNY…KTDN), 129–162 (AVLY…KPDY), and 163–196 (TKAR…DVDN).

This sequence belongs to the TTC4 family. In terms of assembly, forms a complex with Hsp83 and Hsp70aa. Interacts with DNApol-alpha180; the interaction inhibits the activity of the DNA polymerase and occurs only in proliferating cells but not in quiescent cells. In terms of tissue distribution, more abundant in young embryos, pupae and females and a lower level expression seen in late embryos, larvae and males.

Its subcellular location is the nucleus. The protein resides in the nucleoplasm. It is found in the cytoplasm. Functionally, may act as a co-chaperone for HSP83. The chain is DNA polymerase interacting tetratricopeptide repeat-containing, protein of 47 kDa (Dpit47) from Drosophila melanogaster (Fruit fly).